Reading from the N-terminus, the 256-residue chain is Imidazole glycerol phosphate synthase subunit hisF1 (256 aa).

Residues D12 and D131 contribute to the active site.

This sequence belongs to the HisA/HisF family. In terms of assembly, heterodimer of HisH and HisF.

It is found in the cytoplasm. It catalyses the reaction 5-[(5-phospho-1-deoxy-D-ribulos-1-ylimino)methylamino]-1-(5-phospho-beta-D-ribosyl)imidazole-4-carboxamide + L-glutamine = D-erythro-1-(imidazol-4-yl)glycerol 3-phosphate + 5-amino-1-(5-phospho-beta-D-ribosyl)imidazole-4-carboxamide + L-glutamate + H(+). Its pathway is amino-acid biosynthesis; L-histidine biosynthesis; L-histidine from 5-phospho-alpha-D-ribose 1-diphosphate: step 5/9. IGPS catalyzes the conversion of PRFAR and glutamine to IGP, AICAR and glutamate. The HisF subunit catalyzes the cyclization activity that produces IGP and AICAR from PRFAR using the ammonia provided by the HisH subunit. The sequence is that of Imidazole glycerol phosphate synthase subunit hisF1 (hisF1) from Pseudomonas aeruginosa (strain ATCC 15692 / DSM 22644 / CIP 104116 / JCM 14847 / LMG 12228 / 1C / PRS 101 / PAO1).